Consider the following 592-residue polypeptide: Arginine--tRNA ligase (592 aa).

A 'HIGH' region motif is present at residues 123-133 (PNTNKPLHLGH).

This sequence belongs to the class-I aminoacyl-tRNA synthetase family. Monomer.

The protein localises to the cytoplasm. The enzyme catalyses tRNA(Arg) + L-arginine + ATP = L-arginyl-tRNA(Arg) + AMP + diphosphate. This is Arginine--tRNA ligase from Flavobacterium johnsoniae (strain ATCC 17061 / DSM 2064 / JCM 8514 / BCRC 14874 / CCUG 350202 / NBRC 14942 / NCIMB 11054 / UW101) (Cytophaga johnsonae).